Here is a 323-residue protein sequence, read N- to C-terminus: Tetraacyldisaccharide 4'-kinase (323 aa).

56–63 (TVGGVGKT) contributes to the ATP binding site.

The protein belongs to the LpxK family.

The catalysed reaction is a lipid A disaccharide + ATP = a lipid IVA + ADP + H(+). Its pathway is glycolipid biosynthesis; lipid IV(A) biosynthesis; lipid IV(A) from (3R)-3-hydroxytetradecanoyl-[acyl-carrier-protein] and UDP-N-acetyl-alpha-D-glucosamine: step 6/6. In terms of biological role, transfers the gamma-phosphate of ATP to the 4'-position of a tetraacyldisaccharide 1-phosphate intermediate (termed DS-1-P) to form tetraacyldisaccharide 1,4'-bis-phosphate (lipid IVA). The polypeptide is Tetraacyldisaccharide 4'-kinase (Legionella pneumophila (strain Lens)).